Consider the following 274-residue polypeptide: GCGGNGLVLSATDSRACRKVAVKKIVLSDARSMKHALREIKIIRRLDHDNIVKVYEVLGPKGSDLQGELFKFSVAYIVQEYMETDLACLLEQGTLTEEHAKLFMYQLLRGLKYIHSANVLHRDLKPANIFISTEDLVLKIGDFGLARIADQHYSHKGYLSEGLVTKWYRSPRLLLSPNNYTKAIDMWAAGCILAEMLTGKMLFAGAHELEQMQLILDTIPVVREEDKEELLRVMPSFVSSTWEVKRPLRKLLPDVNREAIDFLEKILTFSPMDR.

Residues 1 to 8 (GCGGNGLV) and K23 each bind ATP. A Protein kinase domain is found at 1 to 274 (GCGGNGLVLS…KILTFSPMDR (274 aa)). The Proton acceptor role is filled by D123. Position 160 is a phosphoserine (S160). The short motif at 160–162 (SEG) is the SEG motif element.

Belongs to the protein kinase superfamily. CMGC Ser/Thr protein kinase family. MAP kinase subfamily. As to quaternary structure, homodimer. Heterodimer with ERK3/MAPK6. Interacts with MAPKAPK5. Requires Mg(2+) as cofactor. Post-translationally, phosphorylated by PAK1, PAK2 and PAK3 in the activation loop resulting in catalytic activation. Phosphorylated by MAPKAPK5 at other sites. As to expression, exclusively detected in the brain, where expression is restricted to the choroid plexus and hippocampus, and to a lesser extent in lung.

The protein localises to the cytoplasm. It is found in the nucleus. It carries out the reaction L-seryl-[protein] + ATP = O-phospho-L-seryl-[protein] + ADP + H(+). The enzyme catalyses L-threonyl-[protein] + ATP = O-phospho-L-threonyl-[protein] + ADP + H(+). Its activity is regulated as follows. Activated by phosphorylation in the activation loop. In terms of biological role, atypical MAPK protein. Phosphorylates microtubule-associated protein 2 (MAP2) and MAPKAPK5. The precise role of the complex formed with MAPKAPK5 is still unclear, but the complex follows a complex set of phosphorylation events: upon interaction with atypical MAPKAPK5, ERK4/MAPK4 is phosphorylated and then mediates phosphorylation and activation of MAPKAPK5, which in turn phosphorylates ERK4/MAPK4. May promote entry in the cell cycle. This Rattus norvegicus (Rat) protein is Mitogen-activated protein kinase 4 (Mapk4).